The following is a 930-amino-acid chain: Nonribosomal peptide synthetase acyN (930 aa).

Residues 15 to 436 (LDPQDNKISV…AGRAKETIIV (422 aa)) form an adenylation (A) domain region. Residues 567–646 (APSNETEATI…GLAGTLETLM (80 aa)) form the Carrier domain. S604 is modified (O-(pantetheine 4'-phosphoryl)serine). The interval 665–914 (PLWLVHPGVG…HYTMLGPDNI (250 aa)) is thioesterase (TE) domain.

Belongs to the NRP synthetase family.

The enzyme catalyses 2 3-phenylpyruvate + 2 ATP = polyporic acid + 2 AMP + 2 diphosphate + H(+). The protein operates within secondary metabolite biosynthesis. Its activity is regulated as follows. Hydroxyphenylpyruvate acts more like a competitive inhibitor rather than a substrate. Functionally, nonribosomal peptide synthetase that mediates the biosynthesis of polyporic acid via the condensation of 2 phenylpyruvate units. Polyporic acid is further hydroxylaed by the cytochrome P450 monooxygenase MO6277 into less toxic ascocorynin. The protein is Nonribosomal peptide synthetase acyN of Ascocoryne sarcoides (Purple jellydisc fungus).